The primary structure comprises 132 residues: Transcriptional regulator MraZ (132 aa).

SpoVT-AbrB domains lie at 5-47 and 76-119; these read TYEH…SKDD and TVEI…SKNK.

This sequence belongs to the MraZ family. In terms of assembly, forms oligomers.

The protein localises to the cytoplasm. The protein resides in the nucleoid. This is Transcriptional regulator MraZ from Mycoplasma capricolum subsp. capricolum (strain California kid / ATCC 27343 / NCTC 10154).